A 1451-amino-acid chain; its full sequence is MVFNLENEKDKKVLALSNFLIDNNILDHNELNSLIERIESIYFNKYIEEKVFLFAITISRPLTIDIWNALYEGFNELNEGFKADNESFKLTITFKENEPFFKSKNSFSSVTIAIIKDYFHSFFSKDKKYKILIEQELSNPNFLSYENDELKAQCQTKELTEWLVQKSKSFIFWMNNAGFKNFNFIALYPIDKNESKLKVKAVTVSQYDKQFETKVFATEFIPIHKINQQIDDVKIIGQIFELKTHESLTGKKTLNIYVTDFQLGGSLILKWSYTDEKKIEGITIGNWIKAHIQVERDPNTQILYGIVREINPVEIPNNYKRLDLSKQKRVELVFHTKMTAFDGINDIEEYAQFAKERGWKAITVTDKDNIHIYPKFYEVAKKYDLKAIYGLEFNLTDDHIKIVHNPDNTKLSDATFVIFDIETTGLHGRYDDVIEFSARKIKNNSEIDHQQFFLKIDKPIPKTITEITKITDEMLEGGIDQQQGLEKIRNYLDDCVMVAHNGINFDLPFLQTQFEKYNIKPLTNPLIDTLCLSWALNPLFSSHTLSNICSKLKLEFDDERLHRAEYDTEALKKVFFYFKKQLKEMGINTLTEIDQNLNKKCQIDLMKRVFTNTAIVYVKNQRGFQNLYEMLSIALTDHNANRPLVLASSLAKFRKSFLLTENPVQGDIFKAALTKPINELEKAIEKVDFVLISQPNAYLGYTLREGLKKELINDAIKLVIKTATKLKKLVAVASDAYFIHPWENEYYKAIVCAKGLGGKWHRHFNNKEKEQTVPEVFLHTTDEMLKRMSFLGEDIAYKLVVENTNKIVKLLDLNELVPTKNKLYPPVMQDSNQKLIDKTWKQAEKRYGKNLPKLIKERIEKELNAIISNGFGIVFWISHLLVEQSVKDGYFVGPRGSIGSSLIANLIGISEINPLAAHYLCEQCHYFEVSDSVDDGYDLMIRDCPKCHEKASFKGDGHNIPFATFMGFSGDKIPDIDLNFSSEYQAKAHDYVRKLFGVNNTFRAGTIATVAEKTAYGYARNYFEIIKRVDLATTAEIERFKQKLIGIKRTTGQHPGGIMIFPSDHSVYEFTPCGFPADDVESEWKTTHFEYDALGDAILKLDILGQDDPTMLKHLADLTKINPQNIPHFDKNLISMFSSNKPLNLKPGIVDEVTGAVGIPEFGTKFVRKILEQTKPKDFADLIRVSGLSHGKNVWADNAQKLIKSNRLTLRDVIACRDDIMLYLINKGMQAKDAFEIMEKVRKGIKVNAKEVSLMQNCGVEQYWINACLKINYLFPKAHAAAYVLMAWRIAWFKLYHPLSYYACLLSFKLKEHDINGFEKGYEFIKNRLDELNKLYRIKKIKPKEAELLTSYEVYLEMMARNIKLQQISIQNSNARMFVEHNGVLIAPFITIPGMGEAVASSIVEARNEKPFASLNDFKKRTKITKKHVETMEQLQLFDEFEHQDDHKLFN.

Positions 416-575 constitute an Exonuclease domain; the sequence is FVIFDIETTG…YDTEALKKVF (160 aa).

It belongs to the DNA polymerase type-C family. PolC subfamily.

It is found in the cytoplasm. The catalysed reaction is DNA(n) + a 2'-deoxyribonucleoside 5'-triphosphate = DNA(n+1) + diphosphate. Its function is as follows. Required for replicative DNA synthesis. This DNA polymerase also exhibits 3' to 5' exonuclease activity. The protein is DNA polymerase III PolC-type of Mycoplasma genitalium (strain ATCC 33530 / DSM 19775 / NCTC 10195 / G37) (Mycoplasmoides genitalium).